Consider the following 586-residue polypeptide: Kinesin-like protein KIF25 (586 aa).

A coiled-coil region spans residues 10–94; sequence SFWEQRTRQL…VIQKLNQDIQ (85 aa). The 393-residue stretch at 173–565 folds into the Kinesin motor domain; the sequence is NIRVHCRIRP…LGFGIRARQV (393 aa). Residue 267-274 participates in ATP binding; it reads GQTGSGKS. 2 disordered regions span residues 417-460 and 564-586; these read TADQ…AGRA and QVQR…RRPD.

This sequence belongs to the TRAFAC class myosin-kinesin ATPase superfamily. Kinesin family. As to quaternary structure, homotetramer.

It localises to the cytoplasm. The protein localises to the cytoskeleton. Its subcellular location is the microtubule organizing center. It is found in the centrosome. Minus-end microtubule-dependent motor protein. Acts as a negative regulator of centrosome separation required to prevent premature centrosome separation during interphase. Required to maintain a centered nucleus to ensure that the spindle is stably oriented at the onset of mitosis. May also act as a negative regulator of amino acid starvation-induced autophagy. This is Kinesin-like protein KIF25 from Macaca fascicularis (Crab-eating macaque).